Reading from the N-terminus, the 697-residue chain is Elongation factor G (697 aa).

Residues 10–285 (EKTRNIGIVA…GVNDYLPSPL (276 aa)) enclose the tr-type G domain. Residues 19–26 (AHIDAGKT), 83–87 (DTPGH), and 137–140 (NKMD) contribute to the GTP site.

Belongs to the TRAFAC class translation factor GTPase superfamily. Classic translation factor GTPase family. EF-G/EF-2 subfamily.

It is found in the cytoplasm. Functionally, catalyzes the GTP-dependent ribosomal translocation step during translation elongation. During this step, the ribosome changes from the pre-translocational (PRE) to the post-translocational (POST) state as the newly formed A-site-bound peptidyl-tRNA and P-site-bound deacylated tRNA move to the P and E sites, respectively. Catalyzes the coordinated movement of the two tRNA molecules, the mRNA and conformational changes in the ribosome. This chain is Elongation factor G, found in Ligilactobacillus salivarius (strain UCC118) (Lactobacillus salivarius).